A 141-amino-acid polypeptide reads, in one-letter code: Putative ankyrin repeat protein FPV223 (141 aa).

ANK repeat units lie at residues 21–50, 54–83, 85–114, and 118–140; these read SGRT…DVFK, CMCT…YIVK, RNKL…NENS, and DGLT…MFVI.

The protein is Putative ankyrin repeat protein FPV223 of Vertebrata (FPV).